The following is a 372-amino-acid chain: Alanine dehydrogenase 1 (372 aa).

H94 is a catalytic residue. 170–200 (TYVIFGGGVAATNAANVALGLNAKVIIIELN) serves as a coordination point for NAD(+).

It belongs to the AlaDH/PNT family.

It carries out the reaction L-alanine + NAD(+) + H2O = pyruvate + NH4(+) + NADH + H(+). The protein operates within amino-acid degradation; L-alanine degradation via dehydrogenase pathway; NH(3) and pyruvate from L-alanine: step 1/1. May play a role in cell wall synthesis as L-alanine is an important constituent of the peptidoglycan layer. This is Alanine dehydrogenase 1 (ald1) from Staphylococcus aureus (strain bovine RF122 / ET3-1).